The following is a 213-amino-acid chain: MKSLQALFGGTFDPVHYGHLKPVETLANLIGLTRVTIIPNNVPPHRPQPEANSVQRKHMLELAIADKPLFTLDERELKRNAPSYTAQTLKEWRQEQWPDVPLAFIIGQDSLLTFPTWYEYETILDNAHLIVCRRPGYPLEMAQPQYQQWLEDHLTHNPEDLHLQPAGKIYLAETPWFNISATIIRERLQNGESCEDLLPEPVLTYINQQGLYR.

It belongs to the NadD family.

It carries out the reaction nicotinate beta-D-ribonucleotide + ATP + H(+) = deamido-NAD(+) + diphosphate. The protein operates within cofactor biosynthesis; NAD(+) biosynthesis; deamido-NAD(+) from nicotinate D-ribonucleotide: step 1/1. Functionally, catalyzes the reversible adenylation of nicotinate mononucleotide (NaMN) to nicotinic acid adenine dinucleotide (NaAD). This Escherichia coli O17:K52:H18 (strain UMN026 / ExPEC) protein is Probable nicotinate-nucleotide adenylyltransferase.